A 393-amino-acid chain; its full sequence is Cholinephosphotransferase 1 (393 aa).

Residues 1–40 are Lumenal-facing; it reads MGFFIPQSSLGNLKLYKYQSDDRSFLSNHVLRPFWRKFAT. The helical transmembrane segment at 41 to 61 threads the bilayer; the sequence is IFPLWMAPNLVTLLGFCFIIF. The Cytoplasmic segment spans residues 62-172; it reads NVLTTLYYDP…YHTHKLYLAE (111 aa). A helical membrane pass occupies residues 173–193; sequence FCGPVEGIIVLCISFIAVGIY. The Lumenal segment spans residues 194 to 210; the sequence is GPQTIWHTKVAQFSWQD. The helical transmembrane segment at 211–231 threads the bilayer; that stretch reads FVFDVETVHLMYAFCTGALIF. Residues 232–263 lie on the Cytoplasmic side of the membrane; that stretch reads NIVTAHTNVVRYYESQSTKSATPSKTAENISK. The chain crosses the membrane as a helical span at residues 264-284; that stretch reads AVNGLLPFFAYFSSIFTLVLI. Position 285 (Q285) is a topological domain, lumenal. The chain crosses the membrane as a helical span at residues 286-306; that stretch reads PSFISLALILSIGFSVAFVVG. The Cytoplasmic portion of the chain corresponds to 307–320; that stretch reads RMIIAHLTMQPFPM. A helical transmembrane segment spans residues 321 to 341; it reads VNFPFLIPTIQLVLYAFMVYV. At 342–348 the chain is on the lumenal side; sequence LDYQKGS. A helical transmembrane segment spans residues 349–369; sequence IVSALVWMGLGLTLAIHGMFI. Residues 370–393 lie on the Cytoplasmic side of the membrane; it reads NDIIYDITTFLDIYALSIKHPKEI.

It belongs to the CDP-alcohol phosphatidyltransferase class-I family. Mg(2+) serves as cofactor.

It is found in the microsome membrane. The protein localises to the endoplasmic reticulum membrane. The protein resides in the mitochondrion outer membrane. It carries out the reaction CDP-choline + a 1,2-diacyl-sn-glycerol = a 1,2-diacyl-sn-glycero-3-phosphocholine + CMP + H(+). The catalysed reaction is CDP-N,N-dimethylethanolamine + a 1,2-diacyl-sn-glycerol = a 1,2-diacyl-sn-glycero-3-phospho-N,N-dimethylethanolamine + CMP + H(+). The protein operates within phospholipid metabolism; phosphatidylcholine biosynthesis; phosphatidylcholine from phosphocholine: step 2/2. Its activity is regulated as follows. Requires a divalent cation activator, and is inhibited by CMP. Activated by phospholipids, especially phosphatidylcholine. In terms of biological role, catalyzes the final step in the CDP-choline route leading to phosphatidylcholin (PC). Preferentially uses CDP-monomethylethanolamine as aminoalcohol substrate. Shows highest activity toward di- and mono-unsaturated diacylglycerol species as lipid substrates. The CDP-choline pathway only contributes to net PC synthesis if exogenous choline is present. In its absence, this pathway recycles choline from PC turnover and may contribute to maintaining the proper PC species composition. This is Cholinephosphotransferase 1 (CPT1) from Saccharomyces cerevisiae (strain ATCC 204508 / S288c) (Baker's yeast).